Here is a 287-residue protein sequence, read N- to C-terminus: TLNLIPGMSKIQIRDLPEGVLFGNLESLFSQMLHNMGRMLPRAAAVLMNSFEELDPTIVSDLNSKFNNILCIGPFNLVSPPPPVPDTYGCMAWLDKQKPASVAYISFGSVATPPPHELVALAEALEASKVPFLWSLKDHSKVHLPNGFLDRTKSHGIVLSWAPQVEILEHAALGVFVTHCGWNSILESIVGGVPMICRPFFGDQRLNGRMVEDVWEIGLLMDGGVLTKNGAIDGLNQILLQGKGKKMRENIKRLKELAKGATEPKGSSSKSFTELANLVRSRGSYEN.

The UDP-alpha-D-glucose site is built by Ala-162, Gln-164, His-179, Trp-182, Asn-183, Ser-184, and Glu-187. An an anthocyanidin-binding site is contributed by Gly-202. The UDP-alpha-D-glucose site is built by Asp-203 and Gln-204.

It belongs to the UDP-glycosyltransferase family. As to expression, expressed in cotyledons, hypocotyls, roots and leaves.

It catalyses the reaction an anthocyanidin + UDP-alpha-D-glucose + H(+) = an anthocyanidin 3-O-beta-D-glucoside + UDP. The protein operates within pigment biosynthesis; anthocyanin biosynthesis. Its function is as follows. In the presence of other necessary color factors, this glycosylation reaction allows the accumulation of anthocyanin pigments. This is Anthocyanidin 3-O-glucosyltransferase 7 (GT7) from Manihot esculenta (Cassava).